Reading from the N-terminus, the 242-residue chain is Placenta-expressed transcript 1 protein (242 aa).

The N-terminal stretch at 1–26 (MAILRSLLLPLGLLLCLWLLCSPASC) is a signal peptide. Residues 27–220 (TNSTTNCKPF…TTHKSSANRA (194 aa)) lie on the Extracellular side of the membrane. N-linked (GlcNAc...) asparagine glycosylation is found at asparagine 28, asparagine 81, and asparagine 106. The segment at 162-209 (VITTPTHKPTPAPPKPTTNPQKTTTNHSIPTTSLPKPTTSLYTSHPKL) is disordered. The segment covering 169 to 178 (KPTPAPPKPT) has biased composition (pro residues). Residues 179 to 205 (TNPQKTTTNHSIPTTSLPKPTTSLYTS) show a composition bias toward low complexity. Residues 221–241 (FLCPVREAIQILFIFLIGTLL) form a helical membrane-spanning segment. Position 242 (phenylalanine 242) is a topological domain, cytoplasmic.

Post-translationally, N-glycosylated.

It is found in the membrane. The protein resides in the apical cell membrane. In terms of biological role, modulates leading keratinocyte migration and cellular adhesion to matrix proteins during a wound-healing response and promotes wound repair. May play a role during trichilemmal differentiation of the hair follicle. The sequence is that of Placenta-expressed transcript 1 protein (PLET1) from Bos taurus (Bovine).